Consider the following 411-residue polypeptide: Carbohydrate sulfotransferase 1 (411 aa).

Residue M1 is a topological domain, cytoplasmic. Residues 2–23 (QCSWKAVLLLALASIAIQYTAI) traverse the membrane as a helical; Signal-anchor for type II membrane protein segment. The Lumenal portion of the chain corresponds to 24–411 (RTFTAKSFHT…VEERDFRPFL (388 aa)). N-linked (GlcNAc...) asparagine glycosylation occurs at N56. Residue 69–75 (TRSGSSF) coordinates 3'-phosphoadenylyl sulfate. 2 N-linked (GlcNAc...) asparagine glycosylation sites follow: N145 and N189. Residue 234 to 242 (RDPRGILAS) participates in 3'-phosphoadenylyl sulfate binding. A glycan (N-linked (GlcNAc...) asparagine) is linked at N334. The short motif at 337–339 (RGD) is the Cell attachment site element.

Belongs to the sulfotransferase 1 family. Gal/GlcNAc/GalNAc subfamily.

The protein localises to the golgi apparatus membrane. The enzyme catalyses 3'-phosphoadenylyl sulfate + keratan = adenosine 3',5'-bisphosphate + keratan 6'-sulfate.. The protein operates within glycan metabolism. In terms of biological role, sulfotransferase that utilizes 3'-phospho-5'-adenylyl sulfate (PAPS) as sulfonate donor to catalyze the transfer of sulfate to position 6 of internal galactose (Gal) residues of keratan. Cooperates with B4GALT4 and B3GNT7 glycosyltransferases and CHST6 sulfotransferase to construct and elongate disulfated disaccharide unit [-&gt;3(6-sulfoGalbeta)1-&gt;4(6-sulfoGlcNAcbeta)1-&gt;] within keratan sulfate polymer. Has a preference for sulfating keratan sulfate, but it also transfers sulfate to the unsulfated polymer. Involved in biosynthesis of phosphacan, a major keratan sulfate proteoglycan in the developing brain. Involved in biosynthesis of 6-sulfoGalbeta-containing O-linked glycans in high endothelial venules of lymph nodes. May act in a synergistic manner with CHST4 to generate sialyl 6',6-disulfo Lewis X motif, a recognition determinant for immune cell receptors implicated in leukocyte trafficking. Catalyzes sulfation of N-acetyllactosamine (LacNAc) oligosaccharides with highest efficiency for sialylated LacNAc structures. In Rattus norvegicus (Rat), this protein is Carbohydrate sulfotransferase 1 (Chst1).